Consider the following 156-residue polypeptide: ADP-ribosylation factor-like protein 2-binding protein (156 aa).

It belongs to the ARL2BP family.

The protein resides in the cytoplasm. It localises to the mitochondrion intermembrane space. The protein localises to the cytoskeleton. Its subcellular location is the microtubule organizing center. It is found in the centrosome. The protein resides in the nucleus. It localises to the spindle. The protein localises to the cilium basal body. Its function is as follows. Plays a role as an effector of the ADP-ribosylation factor-like protein 2, ARL2. This Gallus gallus (Chicken) protein is ADP-ribosylation factor-like protein 2-binding protein (ARL2BP).